The following is a 429-amino-acid chain: uncharacterized protein (429 aa).

A compositionally biased stretch (basic and acidic residues) spans 1–12 (MSDSKEDIRNGQ). 3 disordered regions span residues 1-63 (MSDS…APEA), 257-306 (RSRA…SDRM), and 320-429 (YRGY…SDSE). Over residues 328 to 362 (EENEEDDLGDFIAEEEEEEEQEEEQEEDEEDEEEV) the composition is skewed to acidic residues. Positions 369–378 (KGFDADKEAS) are enriched in basic and acidic residues.

It belongs to the LEO1 family.

Its subcellular location is the nucleus. This is an uncharacterized protein from Schizosaccharomyces pombe (strain 972 / ATCC 24843) (Fission yeast).